The following is an 85-amino-acid chain: Large ribosomal subunit protein bL27 (85 aa).

A disordered region spans residues 1–20; sequence MAHKKAAGSSRNGRDSNPKM.

The protein belongs to the bacterial ribosomal protein bL27 family.

In Psychrobacter arcticus (strain DSM 17307 / VKM B-2377 / 273-4), this protein is Large ribosomal subunit protein bL27.